Reading from the N-terminus, the 175-residue chain is Protein-export protein SecB (175 aa).

This sequence belongs to the SecB family. As to quaternary structure, homotetramer, a dimer of dimers. One homotetramer interacts with 1 SecA dimer.

It is found in the cytoplasm. Its function is as follows. One of the proteins required for the normal export of preproteins out of the cell cytoplasm. It is a molecular chaperone that binds to a subset of precursor proteins, maintaining them in a translocation-competent state. It also specifically binds to its receptor SecA. The chain is Protein-export protein SecB from Ehrlichia chaffeensis (strain ATCC CRL-10679 / Arkansas).